A 428-amino-acid chain; its full sequence is 3-phosphoshikimate 1-carboxyvinyltransferase (428 aa).

Positions 23, 24, and 28 each coordinate 3-phosphoshikimate. K23 serves as a coordination point for phosphoenolpyruvate. 2 residues coordinate phosphoenolpyruvate: G97 and R125. 3-phosphoshikimate contacts are provided by S170, S171, Q172, S198, D314, N337, and K341. Q172 lines the phosphoenolpyruvate pocket. The active-site Proton acceptor is D314. 3 residues coordinate phosphoenolpyruvate: R345, R387, and K412.

The protein belongs to the EPSP synthase family. As to quaternary structure, monomer.

It is found in the cytoplasm. The catalysed reaction is 3-phosphoshikimate + phosphoenolpyruvate = 5-O-(1-carboxyvinyl)-3-phosphoshikimate + phosphate. It participates in metabolic intermediate biosynthesis; chorismate biosynthesis; chorismate from D-erythrose 4-phosphate and phosphoenolpyruvate: step 6/7. In terms of biological role, catalyzes the transfer of the enolpyruvyl moiety of phosphoenolpyruvate (PEP) to the 5-hydroxyl of shikimate-3-phosphate (S3P) to produce enolpyruvyl shikimate-3-phosphate and inorganic phosphate. The protein is 3-phosphoshikimate 1-carboxyvinyltransferase of Yersinia pseudotuberculosis serotype IB (strain PB1/+).